The following is a 434-amino-acid chain: Histidinol dehydrogenase (434 aa).

NAD(+) is bound by residues Y130, Q188, and N211. The substrate site is built by S237, Q259, and H262. Residues Q259 and H262 each contribute to the Zn(2+) site. Active-site proton acceptor residues include E326 and H327. Positions 327, 360, 414, and 419 each coordinate substrate. D360 contributes to the Zn(2+) binding site. Zn(2+) is bound at residue H419.

The protein belongs to the histidinol dehydrogenase family. Homodimer. Zn(2+) is required as a cofactor.

It carries out the reaction L-histidinol + 2 NAD(+) + H2O = L-histidine + 2 NADH + 3 H(+). The protein operates within amino-acid biosynthesis; L-histidine biosynthesis; L-histidine from 5-phospho-alpha-D-ribose 1-diphosphate: step 9/9. Catalyzes the sequential NAD-dependent oxidations of L-histidinol to L-histidinaldehyde and then to L-histidine. The polypeptide is Histidinol dehydrogenase (Salmonella typhi).